Here is a 171-residue protein sequence, read N- to C-terminus: Viral CASP8 and FADD-like apoptosis regulator (171 aa).

DED domains lie at 1 to 74 (MSHY…RIFG) and 92 to 171 (PFRC…NLQV).

As to quaternary structure, associates with the death-inducing signaling complex (DISC) formed by TNFRSF6, FADD and caspase-8. Interacts with FADD.

In terms of biological role, inhibits TNFRSF1A, TNFRSF6, TNFRSF10 and TNFRSF12 induced apoptosis. May interfere with caspase-8 recruitment and activation at the death-inducing signaling complex (DISC). May lead to higher virus production and contribute to virus persistence and oncogenicity. The protein is Viral CASP8 and FADD-like apoptosis regulator of Equus caballus (Horse).